Here is a 435-residue protein sequence, read N- to C-terminus: MANFDLTRINCQFLDRHLTFPLLEFLCGKEIYNQQELLEYILETVNKTNMIDYTMDTRKRLNLSQEMPEELVQRKAEVLATLKQLQNEVAPIMKATDILKNGESMKDSKTFVNALQKDYNFKVEHLESAYKLAKYLYECGNYQESTSYLYFCLIVMSPNDKNYLNVLWGKLAAEILTLNWNTALEDLTRLRDYIDNANFSTIQALQQRTWLIHWSVLVFFNHPKGRDLIIEMFLYKPLYLNAIQTMCPHIMRYLATAVVINRTRRNALKDLIKVIQQESYTYRDPITEFLECLYVNFDFEGARLKLHECQTVILNDFFIVACLNEFVEDARLMIFETFCRIHQCITISMLADKLNMKPNEAECWIVNLIRNARLNAKIDSKLGHVVMGTQPLSPYQQLVEKIDSLSMRSEHLAGLIERKSKQKQNQESADSWKYY.

Residues 219–392 (FFNHPKGRDL…GHVVMGTQPL (174 aa)) enclose the PCI domain.

This sequence belongs to the eIF-3 subunit E family. As to quaternary structure, component of the eukaryotic translation initiation factor 3 (eIF-3) complex. The eIF-3 complex interacts with pix. Interacts with mxt. In terms of tissue distribution, expression levels in females and males are relatively similar 10 days after oviposition, however by day 15 expression is higher in gravid females than in males (at protein level).

The protein localises to the cytoplasm. It localises to the microsome. It is found in the endoplasmic reticulum. Component of the eukaryotic translation initiation factor 3 (eIF-3) complex, which is involved in protein synthesis of a specialized repertoire of mRNAs and, together with other initiation factors, stimulates binding of mRNA and methionyl-tRNAi to the 40S ribosome. The eIF-3 complex specifically targets and initiates translation of a subset of mRNAs involved in cell proliferation. In addition to its role in the eIF-3 complex, also functions in protein ubiquitination and degradation. During mitosis required for regulating mitotic microtubule growth and kinetochore formation, and consequently is required for satisfying the spindle assembly checkpoint (SAC) during metaphase to prevent delays in mitotic progression. This is likely by promoting the ubiquitination and degradation of Klp67A, a kinesin-like protein that suppresses microtubule polymerization at plus ends. Acts in the COP9 signalosome (CSN) mediated regulation of cullin neddylation by promoting Cul1 and Cul3 neddylation and negatively regulating the CSN complex subunit CSN5. In Drosophila melanogaster (Fruit fly), this protein is Eukaryotic translation initiation factor 3 subunit E.